The primary structure comprises 67 residues: Protein C' (67 aa).

This sequence belongs to the rhabdoviruses C protein family.

In terms of biological role, seems to stimulates transcription by the viral polymerase. May play a role in viral pathogenesis or transmission by insects vectors. This is Protein C' (P) from Aedes (Bovine).